The following is a 1216-amino-acid chain: Phospholipase D B (1216 aa).

The span at 1 to 14 shows a compositional bias: polar residues; the sequence is MNLSQEHAINQNLH. Positions 1-48 are disordered; that stretch reads MNLSQEHAINQNLHKNQKNEEKIEKKTINKDGRGQMNYDGEEGQGEKS. Residues 17 to 33 are compositionally biased toward basic and acidic residues; that stretch reads QKNEEKIEKKTINKDGR. EF-hand domains follow at residues 196 to 231 and 232 to 267; these read RNAD…MCRG and TKKE…ISDI. Ca(2+)-binding residues include D209, N211, D213, K215, and E220. In terms of domain architecture, PH spans 347 to 462; the sequence is EINMNGQLTK…WVNAIRFHSR (116 aa). The region spanning 585-612 is the PLD phosphodiesterase 1 domain; that stretch reads LSWSHHQKNAIIDQQIAFVGGIDICLMR. Residues H590, K592, and D597 contribute to the active site. The segment at 732–844 is disordered; that stretch reads VSYGREKPTH…GLKSKNYKNN (113 aa). Over residues 776 to 789 the composition is skewed to low complexity; sequence NNSTNSENSENSYS. A compositionally biased stretch (acidic residues) spans 790 to 813; it reads EFDEEDEEGNQEEEDEDEFDEFEK. Positions 1036-1063 constitute a PLD phosphodiesterase 2 domain; it reads EQIYVHSKVLIVDDRVAVIGSCNINDRS. Catalysis depends on residues H1041, K1043, and D1048.

It belongs to the phospholipase D family.

The protein localises to the cytoplasmic vesicle. The protein resides in the cytoplasm. Its subcellular location is the cell cortex. The enzyme catalyses a 1,2-diacyl-sn-glycero-3-phosphocholine + H2O = a 1,2-diacyl-sn-glycero-3-phosphate + choline + H(+). Its activity is regulated as follows. Inhibited by butan-1-ol. Its function is as follows. Plays a role in cell growth. Hydrolyzes membrane phospholipids, such as PtdCho (phosphatidylcholine), producing the free headgroup and PtdOH (phosphatidic acid; signaling molecule on its own). Involved in the inhibition of actin-based motility and endocytosis. Its inhibition causes complete collapse of F-actin organization. Plays an important role in cell migration by localizing along the anterior cell membrane. Overexpression leads to the inability to aggregate even at higher cell density. Also known as a negative regulator of quorum sensing. The chain is Phospholipase D B (pldB) from Dictyostelium discoideum (Social amoeba).